A 366-amino-acid chain; its full sequence is Quinolinate synthase (366 aa).

Residues H44 and S61 each coordinate iminosuccinate. C108 contributes to the [4Fe-4S] cluster binding site. Residues 139–141 and S160 contribute to the iminosuccinate site; that span reads YIN. C228 is a [4Fe-4S] cluster binding site. Iminosuccinate contacts are provided by residues 254-256 and T271; that span reads HPE. A [4Fe-4S] cluster-binding site is contributed by C318.

It belongs to the quinolinate synthase family. Type 3 subfamily. [4Fe-4S] cluster serves as cofactor.

The protein localises to the cytoplasm. It catalyses the reaction iminosuccinate + dihydroxyacetone phosphate = quinolinate + phosphate + 2 H2O + H(+). Its pathway is cofactor biosynthesis; NAD(+) biosynthesis; quinolinate from iminoaspartate: step 1/1. Functionally, catalyzes the condensation of iminoaspartate with dihydroxyacetone phosphate to form quinolinate. The protein is Quinolinate synthase of Listeria innocua serovar 6a (strain ATCC BAA-680 / CLIP 11262).